Reading from the N-terminus, the 815-residue chain is MINLKLFLELKLCFLITLLCSSHISSVSDTFFINCGSPTNVTVNNRTFVSDNNLVQGFSVGTTDSNSGDESTLFQTARVFSDESSSTYRFPIEEHGWFLIRIYFLPLVSASQDLTTARFSVSAQNFTLIREYKPSTTSVVREYILNVTTDSLLLQFLPRTGSVSFINALEVLRLPETLIPEDAKLIGTQKDLKLSSHAMETVSRVNMGNLSVSRDQDKLWRQWDSDSAYKAHFGTPVMNLKAVNFSAGGITDDIAPVYVYGTATRLNSDLDPNTNANLTWTFKVEPGFDYFVRFHFCNIIVDPFGFERQIRFDIFVNSEKVRTIDMTEVLNGTFGAPFFVDAVMRKAKSREGFLNLSIGLVMDVSSYPVSFINGFEISKLSNDKRSLDAFDAILPDGSSSNKSSNTSVGLIAGLSAALCVALVFGVVVSWWCIRKRRRRNRQMQTVHSRGDDHQIKKNETGESLIFSSSKIGYRYPLALIKEATDDFDESLVIGVGGFGKVYKGVLRDKTEVAVKRGAPQSRQGLAEFKTEVEMLTQFRHRHLVSLIGYCDENSEMIIVYEYMEKGTLKDHLYDLDDKPRLSWRQRLEICVGAARGLHYLHTGSTRAIIHRDVKSANILLDDNFMAKVADFGLSKTGPDLDQTHVSTAVKGSFGYLDPEYLTRQQLTEKSDVYSFGVVMLEVVCGRPVIDPSLPREKVNLIEWAMKLVKKGKLEDIIDPFLVGKVKLEEVKKYCEVTEKCLSQNGIERPAMGDLLWNLEFMLQVQAKDEKAAMVDDKPEASVVGSTMQFSVNGVGDIAGVSMSKVFAQMVREETR.

The N-terminal stretch at 1 to 26 is a signal peptide; that stretch reads MINLKLFLELKLCFLITLLCSSHISS. At 27–407 the chain is on the extracellular side; it reads VSDTFFINCG…SSSNKSSNTS (381 aa). 11 N-linked (GlcNAc...) asparagine glycosylation sites follow: Asn-40, Asn-45, Asn-125, Asn-146, Asn-209, Asn-244, Asn-277, Asn-331, Asn-355, Asn-401, and Asn-405. A helical membrane pass occupies residues 408–428; the sequence is VGLIAGLSAALCVALVFGVVV. Topologically, residues 429–815 are cytoplasmic; that stretch reads SWWCIRKRRR…FAQMVREETR (387 aa). The Protein kinase domain occupies 487–761; the sequence is FDESLVIGVG…GDLLWNLEFM (275 aa). ATP is bound by residues 493 to 501 and Lys-515; that span reads IGVGGFGKV. Residue Asp-612 is the Proton acceptor of the active site.

This sequence belongs to the protein kinase superfamily. Ser/Thr protein kinase family.

It is found in the cell membrane. The polypeptide is Probable receptor-like protein kinase At2g39360 (Arabidopsis thaliana (Mouse-ear cress)).